A 250-amino-acid chain; its full sequence is 3-deoxy-manno-octulosonate cytidylyltransferase (250 aa).

It belongs to the KdsB family.

Its subcellular location is the cytoplasm. It carries out the reaction 3-deoxy-alpha-D-manno-oct-2-ulosonate + CTP = CMP-3-deoxy-beta-D-manno-octulosonate + diphosphate. It participates in nucleotide-sugar biosynthesis; CMP-3-deoxy-D-manno-octulosonate biosynthesis; CMP-3-deoxy-D-manno-octulosonate from 3-deoxy-D-manno-octulosonate and CTP: step 1/1. The protein operates within bacterial outer membrane biogenesis; lipopolysaccharide biosynthesis. Activates KDO (a required 8-carbon sugar) for incorporation into bacterial lipopolysaccharide in Gram-negative bacteria. The chain is 3-deoxy-manno-octulosonate cytidylyltransferase from Cytophaga hutchinsonii (strain ATCC 33406 / DSM 1761 / CIP 103989 / NBRC 15051 / NCIMB 9469 / D465).